Here is a 235-residue protein sequence, read N- to C-terminus: Small ribosomal subunit protein uS3 (235 aa).

The KH type-2 domain maps to 39 to 107; sequence VRKFLNKELA…PAQINIAEVK (69 aa). Residues 215 to 235 form a disordered region; sequence AQSEQQPADKPKKAPRGKGRK.

It belongs to the universal ribosomal protein uS3 family. In terms of assembly, part of the 30S ribosomal subunit. Forms a tight complex with proteins S10 and S14.

Functionally, binds the lower part of the 30S subunit head. Binds mRNA in the 70S ribosome, positioning it for translation. The chain is Small ribosomal subunit protein uS3 from Haemophilus influenzae (strain ATCC 51907 / DSM 11121 / KW20 / Rd).